Here is a 420-residue protein sequence, read N- to C-terminus: L-rhamnose isomerase (420 aa).

Mn(2+)-binding residues include His-264, Asp-296, and Asp-298.

The protein belongs to the rhamnose isomerase family. It depends on Mn(2+) as a cofactor.

Its subcellular location is the cytoplasm. The enzyme catalyses L-rhamnopyranose = L-rhamnulose. Its pathway is carbohydrate degradation; L-rhamnose degradation; glycerone phosphate from L-rhamnose: step 1/3. Catalyzes the interconversion of L-rhamnose and L-rhamnulose. The chain is L-rhamnose isomerase from Listeria monocytogenes serotype 4b (strain F2365).